We begin with the raw amino-acid sequence, 122 residues long: Large ribosomal subunit protein uL14c (122 aa).

The protein belongs to the universal ribosomal protein uL14 family. As to quaternary structure, part of the 50S ribosomal subunit.

It is found in the plastid. The protein localises to the chloroplast. Its function is as follows. Binds to 23S rRNA. The polypeptide is Large ribosomal subunit protein uL14c (Gossypium barbadense (Sea Island cotton)).